The primary structure comprises 307 residues: Acetyl-coenzyme A carboxylase carboxyl transferase subunit beta (307 aa).

The region spanning 25 to 294 is the CoA carboxyltransferase N-terminal domain; sequence LWIKDPESGE…TEENGSRRLP (270 aa).

Belongs to the AccD/PCCB family. As to quaternary structure, acetyl-CoA carboxylase is a heterohexamer composed of biotin carboxyl carrier protein (AccB), biotin carboxylase (AccC) and two subunits each of ACCase subunit alpha (AccA) and ACCase subunit beta (AccD).

It is found in the cytoplasm. The enzyme catalyses N(6)-carboxybiotinyl-L-lysyl-[protein] + acetyl-CoA = N(6)-biotinyl-L-lysyl-[protein] + malonyl-CoA. Its pathway is lipid metabolism; malonyl-CoA biosynthesis; malonyl-CoA from acetyl-CoA: step 1/1. In terms of biological role, component of the acetyl coenzyme A carboxylase (ACC) complex. Biotin carboxylase (BC) catalyzes the carboxylation of biotin on its carrier protein (BCCP) and then the CO(2) group is transferred by the transcarboxylase to acetyl-CoA to form malonyl-CoA. This is Acetyl-coenzyme A carboxylase carboxyl transferase subunit beta from Chelativorans sp. (strain BNC1).